Consider the following 137-residue polypeptide: Ribosomal RNA large subunit methyltransferase H (137 aa).

Residues Leu-56, Gly-85, and 104 to 109 (LSPLTL) each bind S-adenosyl-L-methionine.

The protein belongs to the RNA methyltransferase RlmH family. As to quaternary structure, homodimer.

It localises to the cytoplasm. It carries out the reaction pseudouridine(1915) in 23S rRNA + S-adenosyl-L-methionine = N(3)-methylpseudouridine(1915) in 23S rRNA + S-adenosyl-L-homocysteine + H(+). Its function is as follows. Specifically methylates the pseudouridine at position 1915 (m3Psi1915) in 23S rRNA. This is Ribosomal RNA large subunit methyltransferase H from Thermus thermophilus (strain ATCC BAA-163 / DSM 7039 / HB27).